The following is a 182-amino-acid chain: uncharacterized protein (182 aa).

The disordered stretch occupies residues 151–172 (RGPGKPFADEKPCPRERPPADQ). A compositionally biased stretch (basic and acidic residues) spans 157-169 (FADEKPCPRERPP).

This is an uncharacterized protein from Mycobacterium tuberculosis (strain CDC 1551 / Oshkosh).